Reading from the N-terminus, the 86-residue chain is Muscarinic toxin 38 (86 aa).

The N-terminal stretch at 1-21 (MKTLLLTLVVVTIVCLDLGYT) is a signal peptide. Intrachain disulfides connect cysteine 24–cysteine 45, cysteine 38–cysteine 63, cysteine 67–cysteine 78, and cysteine 79–cysteine 84.

This sequence belongs to the three-finger toxin family. Short-chain subfamily. Aminergic toxin sub-subfamily. As to quaternary structure, monomer. Expressed by the venom gland.

The protein localises to the secreted. Functionally, binds to the muscarinic acetylcholine receptor (CHRM). The sequence is that of Muscarinic toxin 38 from Ophiophagus hannah (King cobra).